Here is a 254-residue protein sequence, read N- to C-terminus: Imidazole glycerol phosphate synthase subunit HisF (254 aa).

Catalysis depends on residues Asp13 and Asp132.

The protein belongs to the HisA/HisF family. As to quaternary structure, heterodimer of HisH and HisF.

The protein resides in the cytoplasm. The catalysed reaction is 5-[(5-phospho-1-deoxy-D-ribulos-1-ylimino)methylamino]-1-(5-phospho-beta-D-ribosyl)imidazole-4-carboxamide + L-glutamine = D-erythro-1-(imidazol-4-yl)glycerol 3-phosphate + 5-amino-1-(5-phospho-beta-D-ribosyl)imidazole-4-carboxamide + L-glutamate + H(+). The protein operates within amino-acid biosynthesis; L-histidine biosynthesis; L-histidine from 5-phospho-alpha-D-ribose 1-diphosphate: step 5/9. Functionally, IGPS catalyzes the conversion of PRFAR and glutamine to IGP, AICAR and glutamate. The HisF subunit catalyzes the cyclization activity that produces IGP and AICAR from PRFAR using the ammonia provided by the HisH subunit. In Sulfurovum sp. (strain NBC37-1), this protein is Imidazole glycerol phosphate synthase subunit HisF.